The primary structure comprises 264 residues: Granzyme K (264 aa).

The signal sequence occupies residues 1–24; sequence MTKFSSFSLFFLIVGAYMTHVCFN. The propeptide at 25-26 is activation peptide; the sequence is ME. Residues 27–259 enclose the Peptidase S1 domain; it reads IIGGKEVSPH…YQTWIKSNLV (233 aa). Cys-52 and Cys-68 form a disulfide bridge. Residues His-67 and Asp-116 each act as charge relay system in the active site. 3 cysteine pairs are disulfide-bonded: Cys-149-Cys-220, Cys-181-Cys-199, and Cys-210-Cys-234. Residue Ser-214 is the Charge relay system of the active site.

The protein belongs to the peptidase S1 family. Granzyme subfamily. Expressed in lung, spleen, thymus and peripheral blood leukocytes.

The protein resides in the secreted. It localises to the cytoplasmic granule. The chain is Granzyme K (GZMK) from Homo sapiens (Human).